A 440-amino-acid polypeptide reads, in one-letter code: MQAYFDQLDRVRYEGPKTTNPLAFRHYNPDELVLGKRMEDHLRFAACYWHTFCWNGADMFGVGAFDRPWQQPGEALMLAKRKADVAFEFFHKLNVPFYCFHDVDVSPEGASLKEYKNNFAEMVDVLAAKQEQSGVKLLWGTANCFTNPRYGAGAATNPDPEVFSWAATQVVTAMEATKRLGGENYVLWGGREGYETLLNTDLRQEREQLGRFMQMVVEHKHKIGFQGTLLIEPKPQEPTKHQYDYDAATVYGFLKQFGLEKEIKLNIEANHATLAGHSFHHEIATAIALGLFGSVDANRGDAQLGWDTDQFPNSVEENALVMYEILKAGGFTTGGLNFDAKVRRQSTDKYDLFYGHIGAMDTMALALKVAARMIEDGELDKRVAQRYSGWNSELGQQILKGQMSLSDLAKYAQDHNLSPVHQSGHQELLESLVNHYLFDK.

Residues histidine 101 and aspartate 104 contribute to the active site. Mg(2+) is bound by residues glutamate 232, glutamate 268, histidine 271, aspartate 296, aspartate 307, aspartate 309, and aspartate 339.

Belongs to the xylose isomerase family. In terms of assembly, homotetramer. Mg(2+) is required as a cofactor.

It is found in the cytoplasm. It carries out the reaction alpha-D-xylose = alpha-D-xylulofuranose. The protein is Xylose isomerase of Escherichia fergusonii (strain ATCC 35469 / DSM 13698 / CCUG 18766 / IAM 14443 / JCM 21226 / LMG 7866 / NBRC 102419 / NCTC 12128 / CDC 0568-73).